The chain runs to 177 residues: Gamma-crystallin M1-2 (177 aa).

2 Beta/gamma crystallin 'Greek key' domains span residues 2–40 and 41–83; these read GKII…RVEN and GCWM…RLLS. The interval 84 to 90 is connecting peptide; that stretch reads QNLGIGT. 2 consecutive Beta/gamma crystallin 'Greek key' domains span residues 91 to 131 and 132 to 174; these read NKLR…NVLD and GYWI…RRVI.

The protein belongs to the beta/gamma-crystallin family. As to quaternary structure, monomer.

In terms of biological role, crystallins are the dominant structural components of the vertebrate eye lens. The polypeptide is Gamma-crystallin M1-2 (Aquarana catesbeiana (American bullfrog)).